We begin with the raw amino-acid sequence, 24 residues long: Metallothionein (24 aa).

Cd(2+) contacts are provided by C3, C5, C8, C10, C17, C19, and C22.

The protein belongs to the metallothionein superfamily. Type 8 family. Contains 4 disulfide bonds.

In terms of biological role, metallothioneins have a high content of cysteine residues that bind various heavy metals. The chain is Metallothionein from Neonectria lugdunensis (Aquatic fungus).